We begin with the raw amino-acid sequence, 225 residues long: Nucleolar protein 6 (225 aa).

The disordered stretch occupies residues 1-75; sequence MGSEEDKKLT…GGKGKNGKKG (75 aa). Positions 9-20 are enriched in basic residues; that stretch reads LTKKQLKAQQFR. Residues 21 to 42 are compositionally biased toward basic and acidic residues; it reads KSKEEKDQEKDVKKEQAPEGKR. Residue Ser-45 is modified to Phosphoserine. Basic residues predominate over residues 56–75; it reads KKKRKTRRGRGGKGKNGKKG. The RRM domain maps to 78 to 155; the sequence is FIVFVGSLPR…KKINVELTVG (78 aa). Ser-160 carries the phosphoserine modification. A disordered region spans residues 187–225; it reads NDGNQKKIAKTTATAAQTSGTDNKPVPAGIHPDRAKLLK.

It belongs to the RRM NOP6 family.

The protein resides in the nucleus. Its subcellular location is the nucleolus. Its function is as follows. Predicted to be involved in rRNA processing. The chain is Nucleolar protein 6 (NOP6) from Saccharomyces cerevisiae (strain ATCC 204508 / S288c) (Baker's yeast).